Consider the following 247-residue polypeptide: 2,3-bisphosphoglycerate-dependent phosphoglycerate mutase (247 aa).

Residues 7-14 (RHGESEWN), 20-21 (TG), Arg59, 86-89 (ERHY), Lys97, 113-114 (RR), and 182-183 (GN) each bind substrate. The Tele-phosphohistidine intermediate role is filled by His8. Glu86 functions as the Proton donor/acceptor in the catalytic mechanism.

Belongs to the phosphoglycerate mutase family. BPG-dependent PGAM subfamily.

The enzyme catalyses (2R)-2-phosphoglycerate = (2R)-3-phosphoglycerate. It participates in carbohydrate degradation; glycolysis; pyruvate from D-glyceraldehyde 3-phosphate: step 3/5. Its function is as follows. Catalyzes the interconversion of 2-phosphoglycerate and 3-phosphoglycerate. The protein is 2,3-bisphosphoglycerate-dependent phosphoglycerate mutase of Treponema denticola (strain ATCC 35405 / DSM 14222 / CIP 103919 / JCM 8153 / KCTC 15104).